Reading from the N-terminus, the 606-residue chain is RUN and FYVE domain-containing protein 2 (606 aa).

Residues 37 to 169 form the RUN domain; sequence DSDYPPLQQF…IDANLCVKGE (133 aa). The stretch at 210-534 forms a coiled coil; the sequence is EELNRQLNST…IKEANKALQG (325 aa). Residues 540-598 form an FYVE-type zinc finger; it reads DKEATHCKLCEKEFSLSKRKHHCRNCGEIFCNACSDNELPLPSSPKPVRVCDSCHALLI. Cys546, Cys549, Cys562, Cys565, Cys570, Cys573, Cys590, and Cys593 together coordinate Zn(2+).

Interacts with BMX. As to expression, expressed in brain, lung and testis.

The protein localises to the nucleus. This is RUN and FYVE domain-containing protein 2 (RUFY2) from Homo sapiens (Human).